A 371-amino-acid chain; its full sequence is Homeobox protein Nkx-2.1 (371 aa).

A DNA-binding region (homeobox) is located at residues Arg161–Ala220. 2 disordered regions span residues Gln219–Ala294 and Gly310–Ala339. Residues Ser233–Gly243 show a composition bias toward gly residues. Over residues Cys244 to Gln253 the composition is skewed to low complexity. A Phosphoserine modification is found at Ser254. Positions Ala272–Ala294 are enriched in low complexity.

The protein belongs to the NK-2 homeobox family. In terms of assembly, interacts with WWTR1. Post-translationally, phosphorylated on serine residues by STK3/MST2. In terms of tissue distribution, thyroid and lung.

It localises to the nucleus. Functionally, transcription factor that binds and activates the promoter of thyroid specific genes such as thyroglobulin, thyroperoxidase, and thyrotropin receptor. Crucial in the maintenance of the thyroid differentiation phenotype. May play a role in lung development and surfactant homeostasis. Forms a regulatory loop with GRHL2 that coordinates lung epithelial cell morphogenesis and differentiation. Activates the transcription of GNRHR and plays a role in enhancing the circadian oscillation of its gene expression. Represses the transcription of the circadian transcriptional repressor NR1D1. The protein is Homeobox protein Nkx-2.1 of Homo sapiens (Human).